We begin with the raw amino-acid sequence, 162 residues long: UPF0114 protein Shewmr4_0646 (162 aa).

The next 4 helical transmembrane spans lie at 15 to 35, 53 to 73, 108 to 128, and 136 to 156; these read IMAP…IKFF, LVLV…IVMV, KVAA…FMDV, and IMWY…MGYL.

Belongs to the UPF0114 family.

The protein resides in the cell membrane. The sequence is that of UPF0114 protein Shewmr4_0646 from Shewanella sp. (strain MR-4).